A 216-amino-acid polypeptide reads, in one-letter code: MIITIDGPSGTGKSTIAKALATELNFNYCNTGAMYRTLAYTHLQEPWQALPIKELIDNPPFSFSFISGQPLEAFLEGQLLSAELGTQEVANAASKLSQLPEVRSFMHKLQRKYAELGNCVFEGRDMGSKVFPDADVKIFLTASAEVRASRRLKDLPENSLSKEALHAELVKRDEADSQRLHDPLIIPEGAIILDSSDLTISQVLEKILALVSPNLP.

7–15 (GPSGTGKST) lines the ATP pocket.

The protein belongs to the cytidylate kinase family. Type 1 subfamily.

It localises to the cytoplasm. The catalysed reaction is CMP + ATP = CDP + ADP. The enzyme catalyses dCMP + ATP = dCDP + ADP. The polypeptide is Cytidylate kinase (Chlamydia caviae (strain ATCC VR-813 / DSM 19441 / 03DC25 / GPIC) (Chlamydophila caviae)).